Reading from the N-terminus, the 401-residue chain is tRNA (guanine-N(7)-)-methyltransferase non-catalytic subunit wuho (401 aa).

A disordered region spans residues 45 to 85; that stretch reads KGRPRKYFDADSDSDEEQQNGDEPGTGKNNGGGDTGKKDQD. Positions 54 to 64 are enriched in acidic residues; the sequence is ADSDSDEEQQN. WD repeat units follow at residues 86 to 125, 174 to 213, and 217 to 255; these read DQTN…RTLK, GHMS…NIET, and GHTE…ELAR.

The protein belongs to the WD repeat TRM82 family. Forms a heterodimer with the catalytic subunit.

The protein localises to the nucleus. It functions in the pathway tRNA modification; N(7)-methylguanine-tRNA biosynthesis. Its function is as follows. Required for the formation of N(7)-methylguanine at position 46 (m7G46) in tRNA. In the complex, it is required to stabilize and induce conformational changes of the catalytic subunit. This is tRNA (guanine-N(7)-)-methyltransferase non-catalytic subunit wuho from Culex quinquefasciatus (Southern house mosquito).